We begin with the raw amino-acid sequence, 154 residues long: Mediator of RNA polymerase II transcription subunit 21 (154 aa).

Positions 37–71 (GFERTGSQTPQQQVHQQQQLPQQQQQQQQPQQQED) are disordered. A compositionally biased stretch (low complexity) spans 44 to 71 (QTPQQQVHQQQQLPQQQQQQQQPQQQED). Residues 96-140 (SEESSIELQVQSLQRLEAENKESAEKLEEIVRKGELLLEKIQAAL) adopt a coiled-coil conformation.

Belongs to the Mediator complex subunit 21 family. As to quaternary structure, component of the Mediator complex.

It is found in the nucleus. Its function is as follows. Component of the Mediator complex, a coactivator involved in the regulated transcription of nearly all RNA polymerase II-dependent genes. Mediator functions as a bridge to convey information from gene-specific regulatory proteins to the basal RNA polymerase II transcription machinery. Mediator is recruited to promoters by direct interactions with regulatory proteins and serves as a scaffold for the assembly of a functional preinitiation complex with RNA polymerase II and the general transcription factors. The polypeptide is Mediator of RNA polymerase II transcription subunit 21 (MED21) (Anopheles gambiae (African malaria mosquito)).